The primary structure comprises 117 residues: Large ribosomal subunit protein uL18 (117 aa).

It belongs to the universal ribosomal protein uL18 family. In terms of assembly, part of the 50S ribosomal subunit; part of the 5S rRNA/L5/L18/L25 subcomplex. Contacts the 5S and 23S rRNAs.

In terms of biological role, this is one of the proteins that bind and probably mediate the attachment of the 5S RNA into the large ribosomal subunit, where it forms part of the central protuberance. This chain is Large ribosomal subunit protein uL18, found in Enterobacter sp. (strain 638).